A 1065-amino-acid chain; its full sequence is Cellulose synthase A catalytic subunit 3 [UDP-forming] (1065 aa).

Topologically, residues 1–260 (MESEGETAGK…PSSRINPYRM (260 aa)) are cytoplasmic. Residue S3 is modified to Phosphoserine. Residues C20, C23, C39, C42, C47, C50, C62, and C65 each coordinate Zn(2+). The segment at 20 to 66 (CQICSDNVGKTVDGDRFVACDICSFPVCRPCYEYERKDGNQSCPQCK) adopts an RING-type; degenerate zinc-finger fold. Residues S151, S211, and S216 each carry the phosphoserine modification. The chain crosses the membrane as a helical span at residues 261–281 (VIMLRLVILCLFLHYRITNPV). The Extracellular segment spans residues 282–283 (PN). Residues 284–304 (AFALWLVSVICEIWFALSWIL) traverse the membrane as a helical segment. Over 305-842 (DQFPKWFPVN…LERFAYVNTT (538 aa)) the chain is Cytoplasmic. Positions 343, 349, 350, and 379 each coordinate UDP-alpha-D-glucose. D379 is an active-site residue. A coiled-coil region spans residues 433 to 457 (VKDRRAMKREYEEFKIRINALVSKA). Position 520 (K520) interacts with UDP-alpha-D-glucose. Mn(2+) contacts are provided by K521 and D545. Residues 643–672 (SKLCGGSRKKNSKAKKESDKKKSGRHTDST) are disordered. Over residues 656–670 (AKKESDKKKSGRHTD) the composition is skewed to basic and acidic residues. Residue D765 is part of the active site. The chain crosses the membrane as a helical span at residues 843 to 863 (IYPITSIPLLMYCTLPAVCLF). At 864 to 874 (TNQFIIPQISN) the chain is on the extracellular side. The helical transmembrane segment at 875–895 (IASIWFLSLFLSIFATGILEM) threads the bilayer. The Cytoplasmic portion of the chain corresponds to 896-910 (RWSGVGIDEWWRNEQ). The helical transmembrane segment at 911-931 (FWVIGGVSAHLFAVFQGILKV) threads the bilayer. Residues 932–961 (LAGIDTNFTVTSKASDEDGDFAELYLFKWT) lie on the Extracellular side of the membrane. An N-linked (GlcNAc...) asparagine glycan is attached at N938. Residues 962-982 (TLLIPPTTLLIVNLVGVVAGV) traverse the membrane as a helical segment. Residues 983 to 993 (SYAINSGYQSW) lie on the Cytoplasmic side of the membrane. Residues 994–1014 (GPLFGKLFFAFWVIVHLYPFL) form a helical membrane-spanning segment. The Extracellular segment spans residues 1015-1023 (KGLMGRQNR). A helical membrane pass occupies residues 1024–1044 (TPTIVVVWSVLLASIFSLLWV). The Cytoplasmic portion of the chain corresponds to 1045 to 1065 (RIDPFTSRVTGPDILECGINC).

Belongs to the glycosyltransferase 2 family. Plant cellulose synthase subfamily. Homodimer. Interacts with CESA1 and CESA6. Interacts with STL1 and STL2, but not with GOT1. Binds to CSI1 and CSI3. Interacts with PAT24/TIP1. The cofactor is Zn(2+). Mn(2+) is required as a cofactor. Post-translationally, palmitoylated, in part by PAT24/TIP1. Expressed in young plants, flowers and roots, and to a lower extent in leaves and stems. Localized in all cells except meristematic cells. Accumulates particularly in root caps, root hairs, epidermal layer, midveins of leaves and anthers. Not present in old tissues.

Its subcellular location is the cell membrane. It is found in the golgi apparatus membrane. The catalysed reaction is [(1-&gt;4)-beta-D-glucosyl](n) + UDP-alpha-D-glucose = [(1-&gt;4)-beta-D-glucosyl](n+1) + UDP + H(+). It functions in the pathway glycan metabolism; plant cellulose biosynthesis. Its function is as follows. Catalytic subunit of cellulose synthase terminal complexes ('rosettes'), required for beta-1,4-glucan microfibril crystallization, a major mechanism of the cell wall formation. Involved in the primary cell wall formation, especially in roots. This is Cellulose synthase A catalytic subunit 3 [UDP-forming] from Arabidopsis thaliana (Mouse-ear cress).